The primary structure comprises 515 residues: MINVLINKSSKLVNGVDSCINNKTIRLFCSSSSTNQVNKTPFNLCIIGSGPAGLYTAAKVHRQIPHANITILEKLPYPFGLVRSGISPDHQNEKKVKNTLEKVLLEHPHQIQFIGNVDIEKDIKFQYIKDNFHAVVLACGIEGDKKLGIPGELTLKNVYFAREFIGWLNGNLKDQHKQFDLSNENLAIVGQGNVALDVARLLLKKNSDELKKTDITSTSFDKINKSNVKNIHIIGRRGPLEVSFTNKEIREILTLQNVNTFINDISTLDVSEEDVSKLERAKKRTFELFKQHLKPFDQEIANNGNMNLIFHFLRSPVELLDKYGSSSGSGDGMVLSKIKLEKNKLIIDEKTQQKKAIGSGEFEIIECSSLFRSIGYTGTKQFPSVPFDFNSVSIPNKYGKVLEEPNSDKFINGLYVSGWLKGGPSGSIPNISANSEETASIIHQDYESNQFINNNNNNDGGHNSITSLLQPNHKIINFNDYKKIESEEVKRGKEKGKLLEKIIVFDELKNIINNS.

The FAD site is built by alanine 52, glutamate 73, leucine 81, and isoleucine 119. Residues glutamine 191–valine 194, arginine 236–arginine 237, and glutamate 248 each bind NADP(+). FAD-binding positions include tryptophan 419 and glycine 426–isoleucine 428. Glycine 426 lines the NADP(+) pocket.

It belongs to the ferredoxin--NADP reductase type 1 family. FAD is required as a cofactor.

The protein localises to the mitochondrion inner membrane. It catalyses the reaction 2 reduced [adrenodoxin] + NADP(+) + H(+) = 2 oxidized [adrenodoxin] + NADPH. This chain is Probable NADPH:adrenodoxin oxidoreductase, mitochondrial (fdxr), found in Dictyostelium discoideum (Social amoeba).